A 160-amino-acid polypeptide reads, in one-letter code: Cytochrome c-type biogenesis protein CcmE (160 aa).

Residues 1 to 8 (MNPRRKNR) lie on the Cytoplasmic side of the membrane. A helical; Signal-anchor for type II membrane protein membrane pass occupies residues 9-29 (LILVMLVLVGLGLATALVMYA). Residues 30–160 (LRSNIDLFYT…AVGDNSVRPS (131 aa)) are Periplasmic-facing. Residues His130 and Tyr134 each contribute to the heme site. Residues 133–148 (KYTPPEIEDAMKKDHP) are compositionally biased toward basic and acidic residues. The segment at 133-160 (KYTPPEIEDAMKKDHPAQAVGDNSVRPS) is disordered.

The protein belongs to the CcmE/CycJ family.

Its subcellular location is the cell inner membrane. Its function is as follows. Heme chaperone required for the biogenesis of c-type cytochromes. Transiently binds heme delivered by CcmC and transfers the heme to apo-cytochromes in a process facilitated by CcmF and CcmH. This Erwinia tasmaniensis (strain DSM 17950 / CFBP 7177 / CIP 109463 / NCPPB 4357 / Et1/99) protein is Cytochrome c-type biogenesis protein CcmE.